Reading from the N-terminus, the 189-residue chain is Small heat shock protein 21 (189 aa).

The interval 26-53 (PPNFNPRKIAQGDNGKGQQVSRYGAGAG) is disordered. Residues 77 to 183 (KYFVGFDDNV…HEKIVNIPIS (107 aa)) enclose the sHSP domain.

The protein belongs to the small heat shock protein (HSP20) family.

Heat shock protein required for pathogenicity. Mediates thermotolerance and adaptation to oxidative stress and ethanol-induced stress. Required for invasive growth and filament formation under various filament inducing conditions. Plays a role in the capacity of damaging human-derived endothelial and oral epithelial cells during infection. Potentiates resistance to antifungal drugs, as well as resistance to killing by human neutrophils. Plays a major role in trehalose homeostasis in response to elevated temperatures. Regulates CEK1 activation by phosphorylation in response to elevated temperatures. The chain is Small heat shock protein 21 (HSP21) from Candida albicans (strain SC5314 / ATCC MYA-2876) (Yeast).